A 251-amino-acid polypeptide reads, in one-letter code: Segregation and condensation protein A (251 aa).

This sequence belongs to the ScpA family. Component of a cohesin-like complex composed of ScpA, ScpB and the Smc homodimer, in which ScpA and ScpB bind to the head domain of Smc. The presence of the three proteins is required for the association of the complex with DNA.

The protein resides in the cytoplasm. In terms of biological role, participates in chromosomal partition during cell division. May act via the formation of a condensin-like complex containing Smc and ScpB that pull DNA away from mid-cell into both cell halves. The sequence is that of Segregation and condensation protein A from Clostridium botulinum (strain Alaska E43 / Type E3).